Consider the following 315-residue polypeptide: Methionyl-tRNA formyltransferase (315 aa).

113 to 116 serves as a coordination point for (6S)-5,6,7,8-tetrahydrofolate; it reads SLLP.

The protein belongs to the Fmt family.

It carries out the reaction L-methionyl-tRNA(fMet) + (6R)-10-formyltetrahydrofolate = N-formyl-L-methionyl-tRNA(fMet) + (6S)-5,6,7,8-tetrahydrofolate + H(+). Its function is as follows. Attaches a formyl group to the free amino group of methionyl-tRNA(fMet). The formyl group appears to play a dual role in the initiator identity of N-formylmethionyl-tRNA by promoting its recognition by IF2 and preventing the misappropriation of this tRNA by the elongation apparatus. In Escherichia coli (strain SE11), this protein is Methionyl-tRNA formyltransferase.